Reading from the N-terminus, the 369-residue chain is Biotin synthase (369 aa).

The Radical SAM core domain occupies 51-269 (NYVQVSTLLS…IAVARIMMPK (219 aa)). Residues Cys-66, Cys-70, and Cys-73 each coordinate [4Fe-4S] cluster. Residues Cys-110, Cys-141, Cys-201, and Arg-273 each contribute to the [2Fe-2S] cluster site.

This sequence belongs to the radical SAM superfamily. Biotin synthase family. Homodimer. It depends on [4Fe-4S] cluster as a cofactor. Requires [2Fe-2S] cluster as cofactor.

The enzyme catalyses (4R,5S)-dethiobiotin + (sulfur carrier)-SH + 2 reduced [2Fe-2S]-[ferredoxin] + 2 S-adenosyl-L-methionine = (sulfur carrier)-H + biotin + 2 5'-deoxyadenosine + 2 L-methionine + 2 oxidized [2Fe-2S]-[ferredoxin]. It participates in cofactor biosynthesis; biotin biosynthesis; biotin from 7,8-diaminononanoate: step 2/2. Catalyzes the conversion of dethiobiotin (DTB) to biotin by the insertion of a sulfur atom into dethiobiotin via a radical-based mechanism. The sequence is that of Biotin synthase from Pseudoalteromonas atlantica (strain T6c / ATCC BAA-1087).